We begin with the raw amino-acid sequence, 326 residues long: Lipoyl synthase (326 aa).

C68, C73, C79, C94, C98, C101, and S308 together coordinate [4Fe-4S] cluster. The 218-residue stretch at 80 to 297 (FNHGTATFMI…KDVAMGLGFS (218 aa)) folds into the Radical SAM core domain.

This sequence belongs to the radical SAM superfamily. Lipoyl synthase family. It depends on [4Fe-4S] cluster as a cofactor.

The protein resides in the cytoplasm. The catalysed reaction is [[Fe-S] cluster scaffold protein carrying a second [4Fe-4S](2+) cluster] + N(6)-octanoyl-L-lysyl-[protein] + 2 oxidized [2Fe-2S]-[ferredoxin] + 2 S-adenosyl-L-methionine + 4 H(+) = [[Fe-S] cluster scaffold protein] + N(6)-[(R)-dihydrolipoyl]-L-lysyl-[protein] + 4 Fe(3+) + 2 hydrogen sulfide + 2 5'-deoxyadenosine + 2 L-methionine + 2 reduced [2Fe-2S]-[ferredoxin]. It participates in protein modification; protein lipoylation via endogenous pathway; protein N(6)-(lipoyl)lysine from octanoyl-[acyl-carrier-protein]: step 2/2. Functionally, catalyzes the radical-mediated insertion of two sulfur atoms into the C-6 and C-8 positions of the octanoyl moiety bound to the lipoyl domains of lipoate-dependent enzymes, thereby converting the octanoylated domains into lipoylated derivatives. This Aeromonas salmonicida (strain A449) protein is Lipoyl synthase.